The chain runs to 164 residues: Protein PPLZ02 (164 aa).

The AP2/ERF DNA-binding region spans 7–64; the sequence is RYRGFRQRHWGSWVSEIRHSILKTRIWQGTFESAEDAARAYDEAARLMCGTRARTNFP.

It is found in the nucleus. Functionally, essential for all lupin cells independent of the respective tissue. The protein is Protein PPLZ02 (PPLZ02) of Lupinus polyphyllus (Large-leaved lupine).